Here is a 388-residue protein sequence, read N- to C-terminus: S-adenosylmethionine synthase (388 aa).

H17 contacts ATP. D19 contributes to the Mg(2+) binding site. E45 contacts K(+). Residues E58 and Q106 each contribute to the L-methionine site. The segment at Q106 to R116 is flexible loop. ATP-binding positions include D166–K168, D241, R247–K248, A264, and K268. D241 is an L-methionine binding site. K272 contributes to the L-methionine binding site.

Belongs to the AdoMet synthase family. In terms of assembly, homotetramer; dimer of dimers. The cofactor is Mg(2+). K(+) serves as cofactor.

Its subcellular location is the cytoplasm. The enzyme catalyses L-methionine + ATP + H2O = S-adenosyl-L-methionine + phosphate + diphosphate. The protein operates within amino-acid biosynthesis; S-adenosyl-L-methionine biosynthesis; S-adenosyl-L-methionine from L-methionine: step 1/1. Its function is as follows. Catalyzes the formation of S-adenosylmethionine (AdoMet) from methionine and ATP. The overall synthetic reaction is composed of two sequential steps, AdoMet formation and the subsequent tripolyphosphate hydrolysis which occurs prior to release of AdoMet from the enzyme. The chain is S-adenosylmethionine synthase from Paracoccus denitrificans (strain Pd 1222).